A 104-amino-acid chain; its full sequence is Pyrimidine/purine nucleoside phosphorylase (104 aa).

Belongs to the nucleoside phosphorylase PpnP family.

The enzyme catalyses a purine D-ribonucleoside + phosphate = a purine nucleobase + alpha-D-ribose 1-phosphate. It carries out the reaction adenosine + phosphate = alpha-D-ribose 1-phosphate + adenine. The catalysed reaction is cytidine + phosphate = cytosine + alpha-D-ribose 1-phosphate. It catalyses the reaction guanosine + phosphate = alpha-D-ribose 1-phosphate + guanine. The enzyme catalyses inosine + phosphate = alpha-D-ribose 1-phosphate + hypoxanthine. It carries out the reaction thymidine + phosphate = 2-deoxy-alpha-D-ribose 1-phosphate + thymine. The catalysed reaction is uridine + phosphate = alpha-D-ribose 1-phosphate + uracil. It catalyses the reaction xanthosine + phosphate = alpha-D-ribose 1-phosphate + xanthine. Catalyzes the phosphorolysis of diverse nucleosides, yielding D-ribose 1-phosphate and the respective free bases. Can use uridine, adenosine, guanosine, cytidine, thymidine, inosine and xanthosine as substrates. Also catalyzes the reverse reactions. This is Pyrimidine/purine nucleoside phosphorylase from Leptothrix cholodnii (strain ATCC 51168 / LMG 8142 / SP-6) (Leptothrix discophora (strain SP-6)).